The sequence spans 510 residues: Scarecrow-like protein 29 (510 aa).

The disordered stretch occupies residues Leu90 to Gly142. Basic and acidic residues predominate over residues Gln102–Phe111. Positions Lys119–Ile128 are enriched in basic residues. The segment covering Lys129 to Gly142 has biased composition (basic and acidic residues). One can recognise a GRAS domain in the interval Lys136–Lys510. Residues Arg143–Ser205 form a leucine repeat I (LRI) region. A VHIID region spans residues Leu224–Val294. The VHIID signature appears at Leu259 to Asp263. The leucine repeat II (LRII) stretch occupies residues Asn312 to Gln337. The tract at residues Leu347–Lys435 is PFYRE. The tract at residues Met438–Lys510 is SAW.

It belongs to the GRAS family. As to expression, expressed in seedlings, roots and flowers.

It is found in the nucleus. Functionally, probable transcription factor involved in plant development. In Arabidopsis thaliana (Mouse-ear cress), this protein is Scarecrow-like protein 29 (SCL29).